Here is a 518-residue protein sequence, read N- to C-terminus: Macrophage receptor MARCO (518 aa).

At 1–48 (MGSKELLKEEDFLGSTEDRADFDQAMFPVMETFEINDPVPKKRNGGTF) the chain is on the cytoplasmic side. A helical; Signal-anchor for type II membrane protein transmembrane segment spans residues 49–69 (CMAVMAIHLILLTAGTALLLI). Residues 70 to 518 (QVLNLQEQLQ…HNEDAGVECS (449 aa)) lie on the Extracellular side of the membrane. N-linked (GlcNAc...) asparagine glycans are attached at residues asparagine 87 and asparagine 138. Residues 147–426 (QIKGERGSPG…GESFQRVRIM (280 aa)) are disordered. Residues 149 to 418 (KGERGSPGPK…QKGEKGQKGE (270 aa)) form the Collagen-like domain. The span at 154 to 163 (SPGPKGAPGA) shows a compositional bias: low complexity. Residues 239-250 (KGEHGTKGDKGD) show a composition bias toward basic and acidic residues. 2 stretches are compositionally biased toward low complexity: residues 293-314 (PGVK…QGAP) and 325-344 (RTGL…PGIA). Residues 410–421 (KGEKGQKGESFQ) are compositionally biased toward basic and acidic residues. Residues 423–518 (VRIMGGTNRG…HNEDAGVECS (96 aa)) enclose the SRCR domain. 3 disulfides stabilise this stretch: cysteine 446–cysteine 507, cysteine 459–cysteine 517, and cysteine 487–cysteine 497.

Homotrimer; disulfide-linked. Trimers may assemble in larger oligomers thus resulting in the creation of a large surface capable of interacting with very large ligands. In terms of processing, N-glycosylated. In terms of tissue distribution, expressed in subpopulations of macrophages in the spleen and the medullary cord of lymph nodes (at protein level).

It is found in the cell membrane. Functionally, pattern recognition receptor (PRR) which binds Gram-positive and Gram-negative bacteria. Also plays a role in binding of unopsonized particles by alveolar macrophages. Binds to the secretoglobin SCGB3A2. The polypeptide is Macrophage receptor MARCO (Marco) (Mus musculus (Mouse)).